The following is a 132-amino-acid chain: Phosphoribosyl-AMP cyclohydrolase (132 aa).

Position 79 (Asp-79) interacts with Mg(2+). A Zn(2+)-binding site is contributed by Cys-80. 2 residues coordinate Mg(2+): Asp-81 and Asp-83. Positions 100 and 107 each coordinate Zn(2+).

The protein belongs to the PRA-CH family. As to quaternary structure, homodimer. It depends on Mg(2+) as a cofactor. Zn(2+) is required as a cofactor.

It is found in the cytoplasm. The enzyme catalyses 1-(5-phospho-beta-D-ribosyl)-5'-AMP + H2O = 1-(5-phospho-beta-D-ribosyl)-5-[(5-phospho-beta-D-ribosylamino)methylideneamino]imidazole-4-carboxamide. The protein operates within amino-acid biosynthesis; L-histidine biosynthesis; L-histidine from 5-phospho-alpha-D-ribose 1-diphosphate: step 3/9. Functionally, catalyzes the hydrolysis of the adenine ring of phosphoribosyl-AMP. The polypeptide is Phosphoribosyl-AMP cyclohydrolase (Acidovorax ebreus (strain TPSY) (Diaphorobacter sp. (strain TPSY))).